A 141-amino-acid polypeptide reads, in one-letter code: Hemoglobin subunit alpha-3 (141 aa).

Residues 1–141 (VLSPADKTNV…VSTVLTSKYR (141 aa)) form the Globin domain. Position 58 (His58) interacts with O2. A heme b-binding site is contributed by His87.

It belongs to the globin family. Heterotetramer of two alpha chains and two beta chains. Red blood cells.

In terms of biological role, involved in oxygen transport from the lung to the various peripheral tissues. The protein is Hemoglobin subunit alpha-3 of Gorilla gorilla gorilla (Western lowland gorilla).